The following is a 60-amino-acid chain: Cytochrome c oxidase subunit 9, mitochondrial (60 aa).

Residues 1 to 18 are Mitochondrial matrix-facing; that stretch reads MSAIAPITGSLKKRIMKD. A helical membrane pass occupies residues 19-37; that stretch reads IAVGMGLGTVLGSYWWWGF. Residues 38–57 are Mitochondrial intermembrane-facing; the sequence is HKPKIAARENYYTQLAEQKA. The propeptide at 58 to 60 is removed in mature form; that stretch reads AEE.

The protein belongs to the fungal cytochrome c oxidase subunit 7a family. As to quaternary structure, component of the cytochrome c oxidase (complex IV, CIV), a multisubunit enzyme composed of a catalytic core of 3 subunits and several supernumerary subunits. The complex exists as a monomer or a dimer and forms supercomplexes (SCs) in the inner mitochondrial membrane with ubiquinol-cytochrome c oxidoreductase (cytochrome b-c1 complex, complex III, CIII).

The protein localises to the mitochondrion inner membrane. Its pathway is energy metabolism; oxidative phosphorylation. Its function is as follows. Component of the cytochrome c oxidase, the last enzyme in the mitochondrial electron transport chain which drives oxidative phosphorylation. The respiratory chain contains 3 multisubunit complexes succinate dehydrogenase (complex II, CII), ubiquinol-cytochrome c oxidoreductase (cytochrome b-c1 complex, complex III, CIII) and cytochrome c oxidase (complex IV, CIV), that cooperate to transfer electrons derived from NADH and succinate to molecular oxygen, creating an electrochemical gradient over the inner membrane that drives transmembrane transport and the ATP synthase. Cytochrome c oxidase is the component of the respiratory chain that catalyzes the reduction of oxygen to water. Electrons originating from reduced cytochrome c in the intermembrane space (IMS) are transferred via the dinuclear copper A center (CU(A)) of subunit 2 and heme A of subunit 1 to the active site in subunit 1, a binuclear center (BNC) formed by heme A3 and copper B (CU(B)). The BNC reduces molecular oxygen to 2 water molecules using 4 electrons from cytochrome c in the IMS and 4 protons from the mitochondrial matrix. The protein is Cytochrome c oxidase subunit 9, mitochondrial (COX9) of Eremothecium gossypii (strain ATCC 10895 / CBS 109.51 / FGSC 9923 / NRRL Y-1056) (Yeast).